Reading from the N-terminus, the 184-residue chain is GTP cyclohydrolase 1 (184 aa).

Cysteine 75, histidine 78, and cysteine 146 together coordinate Zn(2+).

It belongs to the GTP cyclohydrolase I family. As to quaternary structure, toroid-shaped homodecamer, composed of two pentamers of five dimers.

It catalyses the reaction GTP + H2O = 7,8-dihydroneopterin 3'-triphosphate + formate + H(+). It functions in the pathway cofactor biosynthesis; 7,8-dihydroneopterin triphosphate biosynthesis; 7,8-dihydroneopterin triphosphate from GTP: step 1/1. The polypeptide is GTP cyclohydrolase 1 (Chromohalobacter salexigens (strain ATCC BAA-138 / DSM 3043 / CIP 106854 / NCIMB 13768 / 1H11)).